The sequence spans 193 residues: MTTARDNSATTLELYRKTLNFNVIGRYDPKIKQLLFHTPHATVYKWEAGENKWNKLEYQGVLAIYLRDVREQAELPVPHQEASAGAEGRCGEVLSGRDIYNYALIVLNRINPENFSIAIAPNSVVNKRRLFSPEENVQQPLEPMDVEVKDELVIIKNLRKEVYGIWIHTPTDRQNIYDLLKYLLENEPKDSFA.

This sequence belongs to the DCP1 family. Component of the decapping complex.

The protein localises to the cytoplasm. It localises to the P-body. Functionally, component of the decapping complex necessary for the degradation of mRNAs, both in normal mRNA turnover and in nonsense-mediated mRNA decay. Removes the 7-methyl guanine cap structure from mRNA molecules, yielding a 5'-phosphorylated mRNA fragment and 7m-GDP. Decapping is the major pathway of mRNA degradation in yeast. It occurs through deadenylation, decapping and subsequent 5' to 3' exonucleolytic decay of the transcript body. This is mRNA-decapping enzyme subunit 1 (DCP1) from Eremothecium gossypii (strain ATCC 10895 / CBS 109.51 / FGSC 9923 / NRRL Y-1056) (Yeast).